The sequence spans 388 residues: MVGTPLFSNAKKILLLGSGELGKEVIIEAQRFGVECIAVDSYENAPAMQVAHRFHVIDMKDAGALREVIEREKPDLIVPEIEAINTDTLKEMETEGYHVVPTANATKLTMDREGIRRLAFEKLGLRTAKYEFAENLEELKEAVQRIGIPCIIKPIMSSSGKGQSTIKSEGDIEKSWDYAKSAARGIGTKVIVEEFIKFDYEITLLTARTAEGTRFCEPIGHIQIDGDYHESWQPHPMCAPTKAKAQEMAKKITDELGGYGIFGVELFVLDDEVIFSEVSPRPHDTGMVTMVTQKMSEFEIHARAILGLPVNVDILFPGASHVIKSEILKWAPEYEIHEASKVKDTKIRLFGKPIAKVGRRMGVALAVSDNVTKARENAEKAAHLVNIK.

N(1)-(5-phospho-beta-D-ribosyl)glycinamide is bound by residues 20-21 (EL) and Glu80. Residues Arg112, Lys153, 158-163 (SSGKGQ), 193-196 (EEFI), and Glu201 contribute to the ATP site. Positions 117–306 (RLAFEKLGLR…EFEIHARAIL (190 aa)) constitute an ATP-grasp domain. Mg(2+) contacts are provided by Glu265 and Glu277. N(1)-(5-phospho-beta-D-ribosyl)glycinamide is bound by residues Asp284, Lys352, and 359–360 (RR).

Belongs to the PurK/PurT family. In terms of assembly, homodimer.

It carries out the reaction N(1)-(5-phospho-beta-D-ribosyl)glycinamide + formate + ATP = N(2)-formyl-N(1)-(5-phospho-beta-D-ribosyl)glycinamide + ADP + phosphate + H(+). The protein operates within purine metabolism; IMP biosynthesis via de novo pathway; N(2)-formyl-N(1)-(5-phospho-D-ribosyl)glycinamide from N(1)-(5-phospho-D-ribosyl)glycinamide (formate route): step 1/1. Involved in the de novo purine biosynthesis. Catalyzes the transfer of formate to 5-phospho-ribosyl-glycinamide (GAR), producing 5-phospho-ribosyl-N-formylglycinamide (FGAR). Formate is provided by PurU via hydrolysis of 10-formyl-tetrahydrofolate. In Methanococcus maripaludis (strain C5 / ATCC BAA-1333), this protein is Formate-dependent phosphoribosylglycinamide formyltransferase.